Here is a 571-residue protein sequence, read N- to C-terminus: Germacrene B synthase TPS16CC (571 aa).

5 residues coordinate (2E,6E)-farnesyl diphosphate: R287, D324, D328, R465, and D468. Residues D324 and D328 each contribute to the Mg(2+) site. The DDXXD motif signature appears at 324–328 (DDIYD). Mg(2+)-binding residues include D468, S472, and E476.

Belongs to the terpene synthase family. Tpsb subfamily. The cofactor is Mg(2+). It depends on Mn(2+) as a cofactor. As to expression, highly expressed in glandular trichomes.

The enzyme catalyses (2E,6E)-farnesyl diphosphate = (1E,4E)-germacrene B + diphosphate. It functions in the pathway secondary metabolite biosynthesis; terpenoid biosynthesis. In terms of biological role, involved in sesquiterpene olefins biosynthesis, constituants of cannabinoids and terpenoids-rich resins. Catalyzes mainly the conversion of (2E)-farnesyl diphosphate to germacrene B, which is spontaneously converted to gamma-elemene as a thermal degradation product. The chain is Germacrene B synthase TPS16CC from Cannabis sativa (Hemp).